A 58-amino-acid chain; its full sequence is Small ribosomal subunit protein eS27 (58 aa).

4 residues coordinate Zn(2+): C10, C13, C29, and C32. The segment at 10–32 (CPDCEHEQVIFDHPSTIVKCIIC) adopts a C4-type zinc-finger fold.

Belongs to the eukaryotic ribosomal protein eS27 family. Part of the 30S ribosomal subunit. It depends on Zn(2+) as a cofactor.

The polypeptide is Small ribosomal subunit protein eS27 (Archaeoglobus fulgidus (strain ATCC 49558 / DSM 4304 / JCM 9628 / NBRC 100126 / VC-16)).